Here is a 180-residue protein sequence, read N- to C-terminus: Photosystem II extrinsic protein V (180 aa).

The N-terminal stretch at 1–40 (MFSKAFSFQKVFAPARRRLLVLLLAALMAGFGWGLAPVFA) is a signal peptide. Residues cysteine 73, cysteine 76, histidine 77, and histidine 128 each contribute to the heme c site.

This sequence belongs to the cytochrome c family. PsbV subfamily. In terms of assembly, PSII is composed of 1 copy each of membrane proteins PsbA, PsbB, PsbC, PsbD, PsbE, PsbF, PsbH, PsbI, PsbJ, PsbK, PsbL, PsbM, PsbT, PsbX, PsbY, PsbZ, Psb30/Ycf12, peripheral proteins PsbO, CyanoQ (PsbQ), PsbU, PsbV and a large number of cofactors. It forms dimeric complexes. Requires heme c as cofactor.

It localises to the cellular thylakoid membrane. Functionally, one of the extrinsic, lumenal subunits of photosystem II (PSII). PSII is a light-driven water plastoquinone oxidoreductase, using light energy to abstract electrons from H(2)O, generating a proton gradient subsequently used for ATP formation. The extrinsic proteins stabilize the structure of photosystem II oxygen-evolving complex (OEC), the ion environment of oxygen evolution and protect the OEC against heat-induced inactivation. Low-potential cytochrome c that plays a role in the OEC of PSII. This is Photosystem II extrinsic protein V from Synechococcus sp. (strain JA-2-3B'a(2-13)) (Cyanobacteria bacterium Yellowstone B-Prime).